The primary structure comprises 576 residues: Arginine--tRNA ligase (576 aa).

The 'HIGH' region motif lies at 122 to 132; it reads PNVAKQMHVGH.

Belongs to the class-I aminoacyl-tRNA synthetase family. As to quaternary structure, monomer.

The protein localises to the cytoplasm. The enzyme catalyses tRNA(Arg) + L-arginine + ATP = L-arginyl-tRNA(Arg) + AMP + diphosphate. The chain is Arginine--tRNA ligase from Yersinia pseudotuberculosis serotype IB (strain PB1/+).